The primary structure comprises 305 residues: Cytochrome c biogenesis protein CcsA (305 aa).

8 helical membrane-spanning segments follow: residues 13 to 33, 42 to 62, 70 to 90, 97 to 117, 135 to 155, 212 to 232, 242 to 262, and 276 to 296; these read IYFS…VYPV, KGII…WFYS, LYES…FIDI, WIGV…TLIL, WLIM…CGSL, YTIV…AVWA, WDPK…YIHI, and VASL…ILGI.

This sequence belongs to the CcmF/CycK/Ccl1/NrfE/CcsA family. As to quaternary structure, may interact with Ccs1.

It localises to the plastid. Its subcellular location is the chloroplast thylakoid membrane. In terms of biological role, required during biogenesis of c-type cytochromes (cytochrome c6 and cytochrome f) at the step of heme attachment. This Welwitschia mirabilis (Tree tumbo) protein is Cytochrome c biogenesis protein CcsA.